We begin with the raw amino-acid sequence, 198 residues long: MADNGQADRKERSNGVIVGTCLAFVAGMIGMAYAAVPLYDMFCRVTGYNGTTQRVEQASDLILDEKIKVTFDANVAAGLPWEFVPVQRDIDVRIGETVQIMYRAKNLASTPTTGQATFNVTPMAAGAYFNKVQCFCFTETTLEPGEEMEMPVVFFVDPEIVKPVETQGIKTLTLSYTFYPREPSKPVAQVKAKAENKL.

Over 1 to 12 the chain is Cytoplasmic; the sequence is MADNGQADRKER. The chain crosses the membrane as a helical; Signal-anchor for type II membrane protein span at residues 13–35; the sequence is SNGVIVGTCLAFVAGMIGMAYAA. Residues 36–198 lie on the Periplasmic side of the membrane; the sequence is VPLYDMFCRV…QVKAKAENKL (163 aa).

This sequence belongs to the COX11/CtaG family.

Its subcellular location is the cell inner membrane. Its function is as follows. Exerts its effect at some terminal stage of cytochrome c oxidase synthesis, probably by being involved in the insertion of the copper B into subunit I. This is Cytochrome c oxidase assembly protein CtaG from Rhizobium meliloti (strain 1021) (Ensifer meliloti).